The chain runs to 1016 residues: EMILIN-1 (1016 aa).

The signal sequence occupies residues 1–21 (MAPRTLWSCYLCCLLTAAAGA). The region spanning 56–131 (HRNWCAYVVT…QGYGGDDCAE (76 aa)) is the EMI domain. 3 cysteine pairs are disulfide-bonded: C60-C121, C85-C92, and C120-C129. Residues 135–182 (PALGPASSTPRPLARPARPNLSGSSAGSPLSGLGGEGPGESEKVQQLE) form a disordered region. The span at 139–165 (PASSTPRPLARPARPNLSGSSAGSPLS) shows a compositional bias: low complexity. N154 is a glycosylation site (N-linked (GlcNAc...) asparagine). Residues 216-256 (TAFNGRQQPADAAARPGVHETLNEIQHQLQLLDTRVSTHDQ) adopt a coiled-coil conformation. Disordered stretches follow at residues 257–288 (ELGH…GPSE) and 383–402 (RGTE…GYTS). Residues 266-279 (GGSSSSGGSRAPAP) show a composition bias toward low complexity. A coiled-coil region spans residues 356-420 (PELGRRLAEL…EDRFNSTLGP (65 aa)). Positions 386-397 (ELGGAAGQGGHP) are enriched in gly residues. An N-linked (GlcNAc...) asparagine glycan is attached at N415. A disordered region spans residues 416–435 (STLGPSEEQEESWPGAPGGL). Residues N455 and N561 are each glycosylated (N-linked (GlcNAc...) asparagine). A coiled-coil region spans residues 576-603 (AHGDEGCGACGGVQEELGRLRDGVERCS). N658 carries N-linked (GlcNAc...) asparagine glycosylation. The stretch at 685-752 (IISEINRLQQ…GLQGLREGLS (68 aa)) forms a coiled coil. N766 and N794 each carry an N-linked (GlcNAc...) asparagine glycan. Disordered stretches follow at residues 811-863 (DLTG…VEGA) and 942-961 (RVDS…VAES). The 51-residue stretch at 814-864 (GPAGEAGPPGPPGLQGPPGPAGPPGSPGKDGQEGPIGPPGPQGEQGVEGAP) folds into the Collagen-like domain. The span at 821–839 (PPGPPGLQGPPGPAGPPGS) shows a compositional bias: pro residues. Positions 835–857 (GPPGSPGKDGQEGPIGPPGPQGE) form a coiled coil. A C1q domain is found at 866–1013 (APVPQVAFSA…GALLYGDPEL (148 aa)).

As to quaternary structure, homotrimer associated through a moderately stable interaction of the C-terminal globular C1q domains, allowing the nucleation of the triple helix and then a further quaternary assembly to higher-order polymers via intermolecular disulfide bonds. Interacts with EMILIN2. Interacts with EFEMP2; this interaction promotes the incorporation of EFEMP2 into the extracellular matrix. As to expression, distributed in tissues where resilience and elastic recoil are prominent. Highest levels in the adult small intestine, aorta, lung, uterus, and appendix and in the fetal spleen, kidney, lung, and heart; intermediate expression was detected in adult liver, ovary, colon, stomach, lymph node and spleen; adult heart, bladder, prostate, adrenal gland, mammary gland, placenta and kidney showed low expression whereas a series of other adult tissues, including skeletal muscle and different regions of adult brain show no expression. Detected in intramuscular nerve bundles, where it particularly localizes in the epineurium, the most external layer of dense connective tissue enclosing the nerve.

The protein resides in the secreted. Its subcellular location is the extracellular space. The protein localises to the extracellular matrix. Involved in elastic and collagen fibers formation. It is required for EFEMP2 deposition into the extracellular matrix, and collagen network assembly and cross-linking via protein-lysine 6-oxidase/LOX activity. May be responsible for anchoring smooth muscle cells to elastic fibers, and may be involved in the processes that regulate vessel assembly. Has cell adhesive capacity. The chain is EMILIN-1 (EMILIN1) from Homo sapiens (Human).